A 717-amino-acid chain; its full sequence is Polyribonucleotide nucleotidyltransferase (717 aa).

Mg(2+)-binding residues include Asp-486 and Asp-492. The KH domain maps to 553–612; sequence PKIVQLQIDIDKISLVIGSTGKTVKAITDEFEVRVQIEQDGRITLFGTDNLKMQKAKAKI. One can recognise an S1 motif domain in the interval 622 to 715; the sequence is GEIYDGIVKK…KFGKIELELA (94 aa). Positions 650–681 are disordered; that stretch reads SNRSRSRDDRYGSDIRHSRYSNRNSRYGRDNR. A compositionally biased stretch (basic and acidic residues) spans 654-666; that stretch reads RSRDDRYGSDIRH.

Belongs to the polyribonucleotide nucleotidyltransferase family. The cofactor is Mg(2+).

The protein localises to the cytoplasm. It catalyses the reaction RNA(n+1) + phosphate = RNA(n) + a ribonucleoside 5'-diphosphate. In terms of biological role, involved in mRNA degradation. Catalyzes the phosphorolysis of single-stranded polyribonucleotides processively in the 3'- to 5'-direction. The sequence is that of Polyribonucleotide nucleotidyltransferase from Borrelia duttonii (strain Ly).